A 282-amino-acid polypeptide reads, in one-letter code: Nucleotide-binding protein XCC2806 (282 aa).

5–12 (GLSGSGKS) contacts ATP. 57–60 (DVRS) contacts GTP.

Belongs to the RapZ-like family.

Displays ATPase and GTPase activities. This is Nucleotide-binding protein XCC2806 from Xanthomonas campestris pv. campestris (strain ATCC 33913 / DSM 3586 / NCPPB 528 / LMG 568 / P 25).